Consider the following 151-residue polypeptide: Probable cGMP 3',5'-cyclic phosphodiesterase subunit delta (151 aa).

The protein belongs to the PDE6D/unc-119 family. As to quaternary structure, interacts with Pde6.

The protein localises to the nucleus. It localises to the cytoplasm. This Drosophila simulans (Fruit fly) protein is Probable cGMP 3',5'-cyclic phosphodiesterase subunit delta.